The following is a 1054-amino-acid chain: Bifunctional cytochrome P450/NADPH--P450 reductase 2 (1054 aa).

The cytochrome P450 stretch occupies residues 1–475 (MKQASAIPQP…QADIKAETKP (475 aa)). Position 403 (Cys-403) interacts with heme. The segment covering 462–480 (QRKEQADIKAETKPKETKP) has biased composition (basic and acidic residues). A disordered region spans residues 462–482 (QRKEQADIKAETKPKETKPKH). Residues 476–1053 (KETKPKHGTP…RRYVKDVWTG (578 aa)) form an NADPH--P450 reductase region. Residues 486-625 (LLVLFGSNLG…HRESWENRFW (140 aa)) enclose the Flavodoxin-like domain. FMN-binding positions include 492–497 (SNLGTA), 539–542 (SYNG), 573–575 (CGN), and 581–583 (TYQ). The 234-residue stretch at 663 to 896 (YGAFEGIVLE…RTPQSGFQMP (234 aa)) folds into the FAD-binding FR-type domain.

The protein in the N-terminal section; belongs to the cytochrome P450 family. Requires FAD as cofactor. FMN serves as cofactor. The cofactor is heme b.

It localises to the cytoplasm. The catalysed reaction is an organic molecule + reduced [NADPH--hemoprotein reductase] + O2 = an alcohol + oxidized [NADPH--hemoprotein reductase] + H2O + H(+). It carries out the reaction 2 oxidized [cytochrome P450] + NADPH = 2 reduced [cytochrome P450] + NADP(+) + H(+). Functionally, functions as a fatty acid monooxygenase. Catalyzes hydroxylation of a range of medium to long-chain fatty acids, with a preference for long-chain unsaturated and branched-chain fatty acids over saturated fatty acids. Hydroxylation of myristic acid occurs mainly at the omega-2 and omega-3 positions, in approximately equal proportions. Also displays a NADPH-dependent reductase activity in the C-terminal domain, which allows electron transfer from NADPH to the heme iron of the cytochrome P450 N-terminal domain. The protein is Bifunctional cytochrome P450/NADPH--P450 reductase 2 of Bacillus subtilis (strain 168).